We begin with the raw amino-acid sequence, 126 residues long: Large ribosomal subunit protein bL19 (126 aa).

It belongs to the bacterial ribosomal protein bL19 family.

Its function is as follows. This protein is located at the 30S-50S ribosomal subunit interface and may play a role in the structure and function of the aminoacyl-tRNA binding site. The polypeptide is Large ribosomal subunit protein bL19 (Prochlorococcus marinus (strain MIT 9312)).